The primary structure comprises 244 residues: Ureidoacrylate amidohydrolase RutB (244 aa).

Asp-38 acts as the Proton acceptor in catalysis. The active site involves Lys-147. Cys-180 acts as the Nucleophile in catalysis.

Belongs to the isochorismatase family. RutB subfamily.

The enzyme catalyses (Z)-3-ureidoacrylate + H2O + H(+) = (Z)-3-aminoacrylate + NH4(+) + CO2. The catalysed reaction is (Z)-3-ureidoacrylate + H2O = (Z)-3-aminoacrylate + carbamate + H(+). It carries out the reaction (Z)-2-methylureidoacrylate + H2O + H(+) = (Z)-2-methylaminoacrylate + NH4(+) + CO2. Its function is as follows. Hydrolyzes ureidoacrylate to form aminoacrylate and carbamate. The carbamate hydrolyzes spontaneously, thereby releasing one of the nitrogen atoms of the pyrimidine ring as ammonia and one of its carbon atoms as CO2. This is Ureidoacrylate amidohydrolase RutB from Shigella sonnei (strain Ss046).